A 329-amino-acid polypeptide reads, in one-letter code: DNA-directed RNA polymerase subunit alpha (329 aa).

Residues 1 to 235 (MQGSVTEFLK…EQLDAFVDLR (235 aa)) form an alpha N-terminal domain (alpha-NTD) region. The segment at 249–329 (FDPILLRPVD…NWPPASIAED (81 aa)) is alpha C-terminal domain (alpha-CTD).

Belongs to the RNA polymerase alpha chain family. As to quaternary structure, homodimer. The RNAP catalytic core consists of 2 alpha, 1 beta, 1 beta' and 1 omega subunit. When a sigma factor is associated with the core the holoenzyme is formed, which can initiate transcription.

The catalysed reaction is RNA(n) + a ribonucleoside 5'-triphosphate = RNA(n+1) + diphosphate. In terms of biological role, DNA-dependent RNA polymerase catalyzes the transcription of DNA into RNA using the four ribonucleoside triphosphates as substrates. The sequence is that of DNA-directed RNA polymerase subunit alpha from Actinobacillus succinogenes (strain ATCC 55618 / DSM 22257 / CCUG 43843 / 130Z).